We begin with the raw amino-acid sequence, 240 residues long: Lysoplasmalogenase TMEM86A (240 aa).

Topologically, residues 1 to 21 (MVSPVTVVKSEGPKLVPFFKA) are cytoplasmic. Residues 22–42 (TCVYFVLWLPSSSPSWVSALI) traverse the membrane as a helical segment. A topological domain (extracellular) is located at residue Lys-43. Residues 44 to 64 (CLPIFCLWLFLLAHGLGFLLT) form a helical membrane-spanning segment. Residues 65–70 (HPSATR) lie on the Cytoplasmic side of the membrane. A helical transmembrane segment spans residues 71-91 (IFVGLVFSAIGDAFLIWQDQG). Position 92 (Tyr-92) is a topological domain, extracellular. The chain crosses the membrane as a helical span at residues 93 to 113 (FVHGMLMFAVTHMLYASAFGM). Residues 114–115 (RP) lie on the Cytoplasmic side of the membrane. Residues 116-136 (LGLRTGLLMVILSGLCYAFLY) traverse the membrane as a helical segment. At 137–138 (PN) the chain is on the extracellular side. The chain crosses the membrane as a helical span at residues 139 to 159 (LTGAFTYVVGVYVAIIGFMGW). The Cytoplasmic segment spans residues 160-174 (RAMAGLQLVGAAWRW). A helical membrane pass occupies residues 175 to 195 (TELAAGTGALLFIVSDLTIAL). The Extracellular segment spans residues 196-206 (DKFCFPVPYSR). The helical transmembrane segment at 207–227 (ALIMSTYYAAQMLIALSAVES) threads the bilayer. Residues 228–240 (REPVEDYRLSKAK) are Cytoplasmic-facing.

The protein belongs to the TMEM86 family.

The protein resides in the endoplasmic reticulum membrane. It carries out the reaction a 1-O-(1Z-alkenyl)-sn-glycero-3-phosphocholine + H2O = a 2,3-saturated aldehyde + sn-glycerol 3-phosphocholine. The catalysed reaction is a 1-O-(1Z-alkenyl)-sn-glycero-3-phosphoethanolamine + H2O = a 2,3-saturated aldehyde + sn-glycero-3-phosphoethanolamine. Catalyzes the hydrolysis of the vinyl ether bond of choline or ethanolamine lysoplasmalogens, forming fatty aldehyde and glycerophosphocholine or glycerophosphoethanolamine, respectively and is specific for the sn-2-deacylated (lyso) form of plasmalogen. Plays an important role in lysoplasmalogen metabolism in the adipocyte tissue and macrophages. The sequence is that of Lysoplasmalogenase TMEM86A (TMEM86A) from Bos taurus (Bovine).